The primary structure comprises 106 residues: Circadian clock oscillator protein KaiB (106 aa).

Belongs to the KaiB family. As to quaternary structure, the KaiABC complex composition changes during the circadian cycle to control KaiC phosphorylation. Complexes KaiC(6), KaiA(2-4):KaiC(6), KaiB(6):KaiC(6) and KaiC(6):KaiB(6):KaiA(12) are among the most important forms, many form cooperatively. Undergoes a major conformational rearrangment; in the free state forms homotetramers as a dimer of dimers. When bound to the CI domain of KaiC switches to a monomeric thioredoxin-fold (KaiB(fs)). KaiB(fs) binds CikA, leading it to dephosphorylate phospho-RpaA.

Its function is as follows. Key component of the KaiABC oscillator complex, which constitutes the main circadian regulator in cyanobacteria. Complex composition changes during the circadian cycle to control KaiC phosphorylation. KaiA stimulates KaiC autophosphorylation, while KaiB sequesters KaiA, leading to KaiC autodephosphorylation. Phospho-Ser-431 KaiC accumulation triggers binding of KaiB to form the KaiB(6):KaiC(6) complex, leading to changes in output regulators CikA and SasA. KaiB switches to a thioredoxin-like fold (KaiB(fs)) when bound to KaiC. KaiB(6):KaiC(6) formation exposes a site for KaiA binding that sequesters KaiA from KaiC, making the KaiC(6):KaiB(6):KaiA(12) complex that results in KaiC autodephosphorylation. In terms of biological role, a metamorphic protein which reversibly switches between an inactive tetrameric fold and a rare, thioredoxin-like monomeric fold (KaiB(fs)). KaiB(fs) binds phospho-KaiC, KaiA and CikA. KaiA and CikA compete for binding to KaiB(fs), and KaiB(fs) and SasA compete for binding to KaiC, thus the clock oscillator and output signal pathway are tightly coupled. In Gloeothece citriformis (strain PCC 7424) (Cyanothece sp. (strain PCC 7424)), this protein is Circadian clock oscillator protein KaiB.